We begin with the raw amino-acid sequence, 351 residues long: Sulfate/thiosulfate import ATP-binding protein CysA (351 aa).

Residues 3 to 237 (ITVRNLHKRF…PRSAFVYEFL (235 aa)) form the ABC transporter domain. 35-42 (GPSGCGKT) is an ATP binding site.

Belongs to the ABC transporter superfamily. Sulfate/tungstate importer (TC 3.A.1.6) family. The complex is composed of two ATP-binding proteins (CysA), two transmembrane proteins (CysT and CysW) and a solute-binding protein (CysP).

The protein localises to the cell inner membrane. It carries out the reaction sulfate(out) + ATP + H2O = sulfate(in) + ADP + phosphate + H(+). It catalyses the reaction thiosulfate(out) + ATP + H2O = thiosulfate(in) + ADP + phosphate + H(+). In terms of biological role, part of the ABC transporter complex CysAWTP involved in sulfate/thiosulfate import. Responsible for energy coupling to the transport system. The protein is Sulfate/thiosulfate import ATP-binding protein CysA of Burkholderia pseudomallei (strain K96243).